Consider the following 261-residue polypeptide: Cytochrome c oxidase subunit 3 (261 aa).

The Mitochondrial matrix segment spans residues 1-15 (MTHQTHAYHMVNPSP). A helical membrane pass occupies residues 16-34 (WPLTGALSALLMTSGLIMW). The Mitochondrial intermembrane segment spans residues 35–40 (FHFNST). Residues 41-66 (ALLTLGLTTNMLTMYQWWRDVIREST) traverse the membrane as a helical segment. The Mitochondrial matrix segment spans residues 67 to 72 (FQGHHT). A helical transmembrane segment spans residues 73-105 (PAVQKGLRYGMILFIISEVLFFTGFFWAFYHSS). At 106–128 (LAPTPELGGCWPPTGIHPLNPLE) the chain is on the mitochondrial intermembrane side. A helical transmembrane segment spans residues 129-152 (VPLLNTSVLLASGVSITWAHHSLM). Residues 153 to 155 (EGN) lie on the Mitochondrial matrix side of the membrane. The helical transmembrane segment at 156–183 (RYHMLQALFITIALGVYFTLLQASEYYE) threads the bilayer. Topologically, residues 184-190 (APFTISD) are mitochondrial intermembrane. A helical membrane pass occupies residues 191–223 (GVYGSTFFVATGFHGLHVIIGSTFLIVCFFRQL). The Mitochondrial matrix portion of the chain corresponds to 224-232 (KFHFTSSHH). Residues 233 to 256 (FGFEAAAWYWHFVDVVWLFLYMSI) form a helical membrane-spanning segment. At 257-261 (YWWGS) the chain is on the mitochondrial intermembrane side.

It belongs to the cytochrome c oxidase subunit 3 family. Component of the cytochrome c oxidase (complex IV, CIV), a multisubunit enzyme composed of 14 subunits. The complex is composed of a catalytic core of 3 subunits MT-CO1, MT-CO2 and MT-CO3, encoded in the mitochondrial DNA, and 11 supernumerary subunits COX4I, COX5A, COX5B, COX6A, COX6B, COX6C, COX7A, COX7B, COX7C, COX8 and NDUFA4, which are encoded in the nuclear genome. The complex exists as a monomer or a dimer and forms supercomplexes (SCs) in the inner mitochondrial membrane with NADH-ubiquinone oxidoreductase (complex I, CI) and ubiquinol-cytochrome c oxidoreductase (cytochrome b-c1 complex, complex III, CIII), resulting in different assemblies (supercomplex SCI(1)III(2)IV(1) and megacomplex MCI(2)III(2)IV(2)).

It localises to the mitochondrion inner membrane. The enzyme catalyses 4 Fe(II)-[cytochrome c] + O2 + 8 H(+)(in) = 4 Fe(III)-[cytochrome c] + 2 H2O + 4 H(+)(out). In terms of biological role, component of the cytochrome c oxidase, the last enzyme in the mitochondrial electron transport chain which drives oxidative phosphorylation. The respiratory chain contains 3 multisubunit complexes succinate dehydrogenase (complex II, CII), ubiquinol-cytochrome c oxidoreductase (cytochrome b-c1 complex, complex III, CIII) and cytochrome c oxidase (complex IV, CIV), that cooperate to transfer electrons derived from NADH and succinate to molecular oxygen, creating an electrochemical gradient over the inner membrane that drives transmembrane transport and the ATP synthase. Cytochrome c oxidase is the component of the respiratory chain that catalyzes the reduction of oxygen to water. Electrons originating from reduced cytochrome c in the intermembrane space (IMS) are transferred via the dinuclear copper A center (CU(A)) of subunit 2 and heme A of subunit 1 to the active site in subunit 1, a binuclear center (BNC) formed by heme A3 and copper B (CU(B)). The BNC reduces molecular oxygen to 2 water molecules using 4 electrons from cytochrome c in the IMS and 4 protons from the mitochondrial matrix. In Ovis aries (Sheep), this protein is Cytochrome c oxidase subunit 3 (MT-CO3).